We begin with the raw amino-acid sequence, 409 residues long: MHLQLNLCAILLSVLNGIQGAPKSINSKSCAISFPENVTAKKEPVYLKPSNDGSLSTPLQPSGPFVSLKIGESLAIFCPGDGKDVETITCNTNFDLASYSCNKSTSTDTIETEEVCGGSGKVYKVGFPLPSGNFHSIYQTCFDKKNLTPLYSIHILNGQAVGYHLKHTRGSFRTNGIYGKVNIDKLYKTQIEKFNKLFGPKQTFFRRPLNFLSRGHLSPEVDFTFRREQHATEMYINTAPQYQSINQGNWLRVENHVRDLAKVLQKDITVVTGILGILRLKSKKIEKEIYLGDDVIAVPAMFWKAVFDPQKQEAIVFVSSNNPHVKTFNPNCKDVCAQAGFGNDNLEYFSNYSIGLTICCKLEEFVKRNKIILPKEVNNKNYTKKLLKFPKTRNKEGDKKVVRKRAKGA.

The signal sequence occupies residues M1 to G20. N37 and N102 each carry an N-linked (GlcNAc...) asparagine glycan. Residue H216 is the Proton acceptor of the active site. N246 lines the Mg(2+) pocket. N351 and N381 each carry an N-linked (GlcNAc...) asparagine glycan.

The protein belongs to the DNA/RNA non-specific endonuclease family. Mg(2+) serves as cofactor. Salivary gland.

Its subcellular location is the secreted. Functionally, hydrolyzes single-stranded and double-stranded DNA with little sequence specificity. Inhibits contact pathway of blood coagulation in the host by preventing activation of coagulation factor XII (F12) triggered by soluble DNA. Modestly up-regulates expression of CSF2, CXCL1 and CXCL8 in cultured human dermal microvascular endothelial cells. At higher doses promotes host neutrophil recruitment at the injection site in mouse model. Its function is as follows. (Microbial infection) Increases Leishmania major survival in the host by disrupting parasite-induced neutrophil extracellular traps. Exacerbates L.major parasite infectivity and increases cutaneous lesions in mouse model. This Lutzomyia longipalpis (Sand fly) protein is Salivary endonuclease.